Consider the following 644-residue polypeptide: 3D-(3,5/4)-trihydroxycyclohexane-1,2-dione hydrolase (644 aa).

Glu-65 is a binding site for thiamine diphosphate. The thiamine pyrophosphate binding stretch occupies residues 442–522 (SLPGDLQRMW…INVLLFDNSG (81 aa)). Positions 493 and 520 each coordinate Mg(2+).

The protein belongs to the TPP enzyme family. The cofactor is Mg(2+). Requires thiamine diphosphate as cofactor.

It carries out the reaction 3D-3,5/4-trihydroxycyclohexane-1,2-dione + H2O = 5-deoxy-D-glucuronate + H(+). It participates in polyol metabolism; myo-inositol degradation into acetyl-CoA; acetyl-CoA from myo-inositol: step 3/7. Involved in the cleavage of the C1-C2 bond of 3D-(3,5/4)-trihydroxycyclohexane-1,2-dione (THcHDO) to yield 5-deoxy-glucuronate (5DG). The polypeptide is 3D-(3,5/4)-trihydroxycyclohexane-1,2-dione hydrolase (Bacillus thuringiensis (strain Al Hakam)).